A 204-amino-acid polypeptide reads, in one-letter code: Recombination protein RecR (204 aa).

The segment at 58-75 (CSVCQNITDLGVDPCHIC) adopts a C4-type zinc-finger fold. The 99-residue stretch at 83–181 (SVICVVESPT…NVTRIARGIP (99 aa)) folds into the Toprim domain.

Belongs to the RecR family.

Functionally, may play a role in DNA repair. It seems to be involved in an RecBC-independent recombinational process of DNA repair. It may act with RecF and RecO. The protein is Recombination protein RecR of Chlorobaculum tepidum (strain ATCC 49652 / DSM 12025 / NBRC 103806 / TLS) (Chlorobium tepidum).